We begin with the raw amino-acid sequence, 92 residues long: Small ribosomal subunit protein uS19c (92 aa).

This sequence belongs to the universal ribosomal protein uS19 family.

The protein localises to the plastid. Its subcellular location is the chloroplast. In terms of biological role, protein S19 forms a complex with S13 that binds strongly to the 16S ribosomal RNA. This chain is Small ribosomal subunit protein uS19c, found in Chara vulgaris (Common stonewort).